A 400-amino-acid chain; its full sequence is Phosphoglycerate kinase (400 aa).

Substrate is bound by residues 21-23 (DFN), Arg36, 59-62 (HCSR), Arg118, and Arg151. Residues Lys201, Glu323, and 353–356 (GGDT) contribute to the ATP site.

This sequence belongs to the phosphoglycerate kinase family. In terms of assembly, monomer.

The protein localises to the cytoplasm. It carries out the reaction (2R)-3-phosphoglycerate + ATP = (2R)-3-phospho-glyceroyl phosphate + ADP. It functions in the pathway carbohydrate degradation; glycolysis; pyruvate from D-glyceraldehyde 3-phosphate: step 2/5. The sequence is that of Phosphoglycerate kinase from Bartonella bacilliformis (strain ATCC 35685 / KC583 / Herrer 020/F12,63).